Here is a 513-residue protein sequence, read N- to C-terminus: MKNSINASEVVNIIKEKVETFDNPIKRENIGEVISVTDGITLVYGLEKAKFGEKVSFASGVEGIVLDLDHDTAGIVVLGNDRDVKEGDVVKCSGDVVQVPVGHELLGRVVNALGDPIDDGGEIRAKNKMYIESKAPGIIDRKSVHEPLQTGIKIIDLLIPIGRGQRELIIGDRQIGKTTIAIDTIINQKKINDEVNENQKIYCVYVAIGQKISTVAKVVNKLKESGALEYTTVVVASASDCAPMQFLAPYTGCTIGEFFRDNGMHCLVVYDDLSKHAVAYRQMSLLLRRPPGREAYPGDIFYVHSRLLERAAKMSDEKGQGSLTALPIIETQAGDVSAYVPTNVISITDGQIFLESELFHKGFRPAVNIGLSVSRVGSAAQLKSVKKVAGSIKLSLAQYRELEDFAKFGSDLDATVQLSLNKGKYLIELLKQKQYSPMQIEEQVLLMYIFSNLYGQLNKVQVSNINRFECDLINYFQTVHPGVLKKLSGDMNDDIKDDILGIVSDFVTQFNCV.

171–178 is a binding site for ATP; it reads GDRQIGKT.

It belongs to the ATPase alpha/beta chains family. As to quaternary structure, F-type ATPases have 2 components, CF(1) - the catalytic core - and CF(0) - the membrane proton channel. CF(1) has five subunits: alpha(3), beta(3), gamma(1), delta(1), epsilon(1). CF(0) has three main subunits: a(1), b(2) and c(9-12). The alpha and beta chains form an alternating ring which encloses part of the gamma chain. CF(1) is attached to CF(0) by a central stalk formed by the gamma and epsilon chains, while a peripheral stalk is formed by the delta and b chains.

The protein localises to the cell membrane. It carries out the reaction ATP + H2O + 4 H(+)(in) = ADP + phosphate + 5 H(+)(out). Produces ATP from ADP in the presence of a proton gradient across the membrane. The alpha chain is a regulatory subunit. The protein is ATP synthase subunit alpha of Wolbachia pipientis subsp. Culex pipiens (strain wPip).